A 398-amino-acid chain; its full sequence is E3 ubiquitin-protein ligase ATL6 (398 aa).

Residues 1–29 form the signal peptide; it reads MRSSDHMAFAGVLPIVFLLILSSADLAAS. Residues 50 to 70 form a helical membrane-spanning segment; sequence AVIVVILIAALFFMGFFSIYF. The segment at 128–170 adopts an RING-type; atypical zinc-finger fold; that stretch reads CAICLNEFEDDETLRLLPKCDHVFHPHCIDAWLEAHVTCPVCR. S278 is modified (phosphoserine). The tract at residues 368–398 is disordered; it reads PRGGVNKDGEGTSVKSTGASGSTSGSVRLPV. Over residues 378 to 398 the composition is skewed to low complexity; sequence GTSVKSTGASGSTSGSVRLPV.

Belongs to the RING-type zinc finger family. ATL subfamily.

The protein localises to the membrane. The enzyme catalyses S-ubiquitinyl-[E2 ubiquitin-conjugating enzyme]-L-cysteine + [acceptor protein]-L-lysine = [E2 ubiquitin-conjugating enzyme]-L-cysteine + N(6)-ubiquitinyl-[acceptor protein]-L-lysine.. Its pathway is protein modification; protein ubiquitination. E3 ubiquitin-protein ligase able to catalyze polyubiquitination with ubiquitin-conjugating enzyme E2 UBC8 in vitro. May be involved in the plant C/N response and the early steps of the plant defense signaling pathway. The chain is E3 ubiquitin-protein ligase ATL6 (ATL6) from Arabidopsis thaliana (Mouse-ear cress).